Reading from the N-terminus, the 448-residue chain is FAD-dependent monooxygenase srdH (448 aa).

The FAD site is built by Glu32 and Arg107. The active site involves Gln227. FAD is bound at residue Asp313.

It belongs to the paxM FAD-dependent monooxygenase family. The cofactor is FAD.

Highly reducing polyketide synthase; part of the gene cluster that mediates the biosynthesis of sordarial, a salicylic aldehyde structurally related to the phytotoxin pyriculol. The most interesting aspect of this pathway is formation of an aromatic product from the highly reducing polyketide synthase srdA. SrdA synthesizes a reduced polyketide chain from one molecule of acetyl-CoA and five molecules of malonyl-CoA. The polyketide chain is then reductively released as an aldehyde. The oxidoreductases srdC, srdD and srdE then oxidize one of the hydroxy groups to facilitate the intramolecular aldol condensation, followed by dehydration to yield a salicylic aldehyde. This aldehyde can undergo facile reduction by endogenous reductases to yield the alcohol 1-hydroxy-2-hydroxymethyl-3-pent-1,3-dienylbenzene. The flavin-dependent srdI counteract against the propensity of the aldehydes to be reduced under physiological conditions and is responsible for reoxidizing 1-hydroxy-2-hydroxymethyl-3-pent-1,3-dienylbenzene back to the salicylic aldehyde. This salicylic aldehyde is then selectively epoxidized by the cupin-domain-containing oxidoreductase srdB to yield the epoxide, which can be hydrolyzed stereoselectively by the hydrolase srdG to give the final product sordarial. The polypeptide is FAD-dependent monooxygenase srdH (Neurospora crassa (strain ATCC 24698 / 74-OR23-1A / CBS 708.71 / DSM 1257 / FGSC 987)).